The following is a 435-amino-acid chain: Elongation factor 1-alpha (435 aa).

Residues 4-229 enclose the tr-type G domain; the sequence is KPHLNLIVIG…DQLEIPPKPV (226 aa). The segment at 13 to 20 is G1; that stretch reads GHVDHGKS. 13-20 contacts GTP; it reads GHVDHGKS. Serine 20 is a Mg(2+) binding site. The interval 69–73 is G2; it reads GVTIN. The tract at residues 90 to 93 is G3; it reads DAPG. Residues 90–94 and 152–155 each bind GTP; these read DAPGH and NKMD. The G4 stretch occupies residues 152-155; it reads NKMD. Residues 193-195 form a G5 region; sequence VAP.

This sequence belongs to the TRAFAC class translation factor GTPase superfamily. Classic translation factor GTPase family. EF-Tu/EF-1A subfamily.

Its subcellular location is the cytoplasm. It carries out the reaction GTP + H2O = GDP + phosphate + H(+). In terms of biological role, GTP hydrolase that promotes the GTP-dependent binding of aminoacyl-tRNA to the A-site of ribosomes during protein biosynthesis. The sequence is that of Elongation factor 1-alpha from Sulfurisphaera tokodaii (strain DSM 16993 / JCM 10545 / NBRC 100140 / 7) (Sulfolobus tokodaii).